Consider the following 47-residue polypeptide: Variabilin (47 aa).

Residues 32-34 (RGD) carry the Cell attachment site motif.

In terms of processing, contains 2 disulfide bonds. As to expression, expressed in salivary glands.

It localises to the secreted. Its function is as follows. Potently inhibits platelet aggregation induced by ADP (IC(50)=157 nM, complete inhibition at 514 nM). Also inhibits platelet aggregation induced by collagen and by the thrombin receptor peptide SFLLRNP. Is a potent antagonist of the fibrinogen receptor glycoprotein IIb-IIIa (ITGA2B/ITGB3) and the vitronectin receptor alpha-v/beta-3 (ITGAV/ITGB3). The polypeptide is Variabilin (Dermacentor variabilis (American dog tick)).